A 69-amino-acid chain; its full sequence is Defensin-like protein 166 (69 aa).

Positions 1–15 (MIIVIIFLVIYFNNQ) are cleaved as a signal peptide. 4 disulfides stabilise this stretch: C19–C68, C24–C44, C29–C62, and C33–C64.

The protein belongs to the DEFL family.

The protein resides in the secreted. The protein is Defensin-like protein 166 of Arabidopsis thaliana (Mouse-ear cress).